A 96-amino-acid chain; its full sequence is Large ribosomal subunit protein eL14 (96 aa).

It belongs to the eukaryotic ribosomal protein eL14 family.

This chain is Large ribosomal subunit protein eL14, found in Metallosphaera sedula (strain ATCC 51363 / DSM 5348 / JCM 9185 / NBRC 15509 / TH2).